The following is a 329-amino-acid chain: Homeobox protein Nkx-3.2 (329 aa).

Positions 107–188 (GLGSPCGGAP…PDPSPPDEDP (82 aa)) are disordered. A compositionally biased stretch (gly residues) spans 110-124 (SPCGGAPGAGAGGEP). The segment covering 138–160 (ELGRPGDIGERKKQRPLEARAKG) has biased composition (basic and acidic residues). Residues 202–261 (KKRSRAAFSHAQVFELERRFNHQRYLSGPERADLAASLKLTETQVKIWFQNRRYKTKRRQ) constitute a DNA-binding region (homeobox).

The protein belongs to the NK-3 homeobox family. As to expression, first expressed in developing facial cartilage in early tailbud embryos, with expression localized to the basihyobranchial, palatoquadrate and possibly Meckel's cartilages. Shortly after, a second area of expression is seen in the musculature of the anterior gut. During late embryogenesis, gut expression extends into hindgut tissues. In adults, expressed at a high level in the kidney, pancreas, spleen and stomach and at a slightly lower level in the intestine, skeletal muscle and tongue. Adult heart, liver and lung show little or no expression.

It is found in the nucleus. This chain is Homeobox protein Nkx-3.2 (nkx3-2), found in Xenopus laevis (African clawed frog).